The sequence spans 285 residues: Acetyl-coenzyme A carboxylase carboxyl transferase subunit beta (285 aa).

One can recognise a CoA carboxyltransferase N-terminal domain in the interval 24-285; the sequence is GLWYKSPTGK…DLIQNQPVRA (262 aa).

It belongs to the AccD/PCCB family. In terms of assembly, acetyl-CoA carboxylase is a heterohexamer composed of biotin carboxyl carrier protein (AccB), biotin carboxylase (AccC) and two subunits each of ACCase subunit alpha (AccA) and ACCase subunit beta (AccD).

Its subcellular location is the cytoplasm. It catalyses the reaction N(6)-carboxybiotinyl-L-lysyl-[protein] + acetyl-CoA = N(6)-biotinyl-L-lysyl-[protein] + malonyl-CoA. Its pathway is lipid metabolism; malonyl-CoA biosynthesis; malonyl-CoA from acetyl-CoA: step 1/1. Functionally, component of the acetyl coenzyme A carboxylase (ACC) complex. Biotin carboxylase (BC) catalyzes the carboxylation of biotin on its carrier protein (BCCP) and then the CO(2) group is transferred by the transcarboxylase to acetyl-CoA to form malonyl-CoA. This chain is Acetyl-coenzyme A carboxylase carboxyl transferase subunit beta, found in Christiangramia forsetii (strain DSM 17595 / CGMCC 1.15422 / KT0803) (Gramella forsetii).